We begin with the raw amino-acid sequence, 87 residues long: Small ribosomal subunit protein bS20 (87 aa).

Residues Met-1 to Ile-11 are compositionally biased toward basic residues. Residues Met-1–His-23 are disordered.

This sequence belongs to the bacterial ribosomal protein bS20 family.

Functionally, binds directly to 16S ribosomal RNA. The protein is Small ribosomal subunit protein bS20 of Geotalea daltonii (strain DSM 22248 / JCM 15807 / FRC-32) (Geobacter daltonii).